We begin with the raw amino-acid sequence, 2360 residues long: Nucleoprotein TPR (2360 aa).

A2 carries the N-acetylalanine modification. The tract at residues 3–13 (AVLQQVLERPE) is sufficient for interaction with TPR. The segment at 14–117 (LNKLPKSTQN…GIQSQFTRAK (104 aa)) is necessary for interaction with HSF1. A coiled-coil region spans residues 24–370 (KLEKFLAEQQ…SATKRKGAIL (347 aa)). Residues K252, K312, and K345 each carry the N6-acetyllysine modification. S379 carries the phosphoserine modification. Residues 423-603 (LDEIVKEVEA…RESRQHQMQL (181 aa)) adopt a coiled-coil conformation. N6-acetyllysine is present on residues K428, K457, and K477. The segment at 437-513 (LKRQREEYER…LMELEEARGN (77 aa)) is necessary for association to the NPC. 3 positions are modified to phosphoserine: S522, S523, and S632. Positions 664–1172 (ETIEAKAALK…IEKLSDKVVT (509 aa)) form a coiled coil. K713, K723, K748, and K755 each carry N6-acetyllysine. A compositionally biased stretch (polar residues) spans 915-924 (LASQSTQRTG). Residues 915–939 (LASQSTQRTGKGQPGDRDDVDDLKS) form a disordered region. The segment covering 928–939 (PGDRDDVDDLKS) has biased composition (basic and acidic residues). Residues S1180 and S1185 each carry the phosphoserine modification. Coiled-coil stretches lie at residues 1215–1420 (EVAQ…LDAK) and 1472–1629 (VQEM…QRDE). Residues 1218 to 1320 (QVESLRYRQR…NAELSEKSGM (103 aa)) are necessary for interaction with HSF1. 2 disordered regions span residues 1479-1520 (KDNL…TAQL) and 1618-1673 (EHQE…PTPV). Composition is skewed to basic and acidic residues over residues 1503-1512 (LSEKETEARS) and 1618-1630 (EHQERHLEQRDEP). Over residues 1632 to 1651 (EPTNKAPEQQRQITLKTTPA) the composition is skewed to polar residues. K1689 is subject to N6-acetyllysine. T1691 carries the phosphothreonine modification. Residues 1801-1826 (QSSPVERPSTSTAVFGTVSATPSSSL) are compositionally biased toward polar residues. Residues 1801-2122 (QSSPVERPST…TPGIGGMQQH (322 aa)) are disordered. The segment at 1811–1866 (STAVFGTVSATPSSSLPKRAREEEEDSTIEAGDQVSDDTVEMPLPKKLKTVTPVGT) is sufficient and essential for mediating its nuclear import. Residues 1866–1880 (TEEEVMAEESTDGEA) show a composition bias toward acidic residues. The segment covering 1881–1892 (ETQTYNQDSQDS) has biased composition (polar residues). S1892 is subject to Phosphoserine. Positions 1923–1934 (QSDQQTTSSQDG) are enriched in low complexity. Composition is skewed to acidic residues over residues 1945–1986 (DSDD…EDSN) and 1996–2017 (DGYEADDAEGGDGTDPGTETEE). The span at 2023–2061 (ESNQRAADSQNSGEGNTSAAESSFSQEVAREQQPTSASE) shows a compositional bias: polar residues. 5 positions are modified to phosphoserine: S2031, S2034, S2045, S2047, and S2070. An omega-N-methylarginine mark is found at R2103 and R2108. 2 positions are modified to phosphothreonine: T2113 and T2134. S2152 is subject to Phosphoserine. An Omega-N-methylarginine modification is found at R2160. A compositionally biased stretch (polar residues) spans 2224–2241 (ESTTSDASEHASQSVPMV). The interval 2224–2360 (ESTTSDASEH…RGGINRGNIN (137 aa)) is disordered. Low complexity predominate over residues 2242–2254 (TTSTGTLSTTNET). 2 stretches are compositionally biased toward acidic residues: residues 2256–2269 (AGDDGDEVFVETES) and 2282–2296 (SQQEEEPVQASDESD). Over residues 2297–2317 (LPSTSQDPPSSSSVDTSSSQP) the composition is skewed to low complexity. Asymmetric dimethylarginine occurs at positions 2340, 2342, and 2351. Residues 2349–2360 (GGRGGINRGNIN) are compositionally biased toward gly residues.

It belongs to the TPR family. As to quaternary structure, homodimer. Part of the nuclear pore complex (NPC). Associates with the XPO1/CRM1-mediated nuclear export complex, the Importin alpha/Importin beta receptor and the dynein 1 complex. Interacts (via C-terminal domain) with the KPNB1; the interaction occurs in a RanGTP-dependent manner. Interacts (via C-terminal region and phosphorylated form) with MAPK1/ERK2 (via phosphorylated form); the interaction requires dimerization of MAPK1/ERK2 and increases following EGF stimulation. Interacts with MAPK3/ERK1; the interaction increases following EGF stimulation. Interacts (via coiled coil region) with NUP153; the interaction is direct. Interacts with HSF1; the interaction increases in a stress-responsive manner and stimulates export of stress-induced HSP70 mRNA. Interacts with huntingtin/HTT; the interaction is inhibited by aggregated huntingtin/HTT forms with expanded polyglutamine stretch. Interacts with MAD1L1 (via N-terminal region), MAD2L1, and TTK; the interactions occurs in a microtubule-independent manner. Interacts (via middle region) with DYNLL1. Interacts with DCTN1, dynein, NUP153 and tubulin. Interacts with IFI204 (via C-terminal region). Interacts with IFI203. Interacts with MTA1. Interacts with ZC3HC1; this interaction mediates ZC3HC1 nuclear envelopes (NE)-association but also required for proper positioning of a substantial amount of TPR at the nuclear basket (NB). Post-translationally, phosphorylated. Phosphorylation occurs on serine and threonine residues (comprised in the C-terminal region) by MAPK1/ERK2 and stabilizes the interaction between these two proteins.

The protein localises to the nucleus. It is found in the nucleus membrane. It localises to the nucleus envelope. The protein resides in the nuclear pore complex. Its subcellular location is the cytoplasm. The protein localises to the cytoskeleton. It is found in the spindle. It localises to the chromosome. The protein resides in the centromere. Its subcellular location is the kinetochore. Functionally, component of the nuclear pore complex (NPC), a complex required for the trafficking across the nuclear envelope. Functions as a scaffolding element in the nuclear phase of the NPC essential for normal nucleocytoplasmic transport of proteins and mRNAs, plays a role in the establishment of nuclear-peripheral chromatin compartmentalization in interphase, and in the mitotic spindle checkpoint signaling during mitosis. Involved in the quality control and retention of unspliced mRNAs in the nucleus; in association with NUP153, regulates the nuclear export of unspliced mRNA species bearing constitutive transport element (CTE) in a NXF1- and KHDRBS1-independent manner. Negatively regulates both the association of CTE-containing mRNA with large polyribosomes and translation initiation. Does not play any role in Rev response element (RRE)-mediated export of unspliced mRNAs. Implicated in nuclear export of mRNAs transcribed from heat shock gene promoters; associates both with chromatin in the HSP70 promoter and with mRNAs transcribed from this promoter under stress-induced conditions. Modulates the nucleocytoplasmic transport of activated MAPK1/ERK2 and huntingtin/HTT and may serve as a docking site for the XPO1/CRM1-mediated nuclear export complex. Also plays a role as a structural and functional element of the perinuclear chromatin distribution; involved in the formation and/or maintenance of NPC-associated perinuclear heterochromatin exclusion zones (HEZs). Finally, acts as a spatial regulator of the spindle-assembly checkpoint (SAC) response ensuring a timely and effective recruitment of spindle checkpoint proteins like MAD1L1 and MAD2L1 to unattached kinetochore during the metaphase-anaphase transition before chromosome congression. Its N-terminus is involved in activation of oncogenic kinases. Plays a role in the regulation of nuclear protein export. The protein is Nucleoprotein TPR of Rattus norvegicus (Rat).